Reading from the N-terminus, the 231-residue chain is Succinate dehydrogenase subunit 5, mitochondrial (231 aa).

Residues methionine 1 to phenylalanine 63 constitute a mitochondrion transit peptide.

In terms of assembly, component of complex II composed of eight subunits in plants: four classical SDH subunits SDH1, SDH2, SDH3 and SDH4 (a flavoprotein (FP), an iron-sulfur protein (IP), and a cytochrome b composed of a large and a small subunit.), as well as four subunits unknown in mitochondria from bacteria and heterotrophic eukaryotes.

It localises to the mitochondrion inner membrane. It functions in the pathway carbohydrate metabolism; tricarboxylic acid cycle. This is Succinate dehydrogenase subunit 5, mitochondrial from Oryza sativa subsp. japonica (Rice).